The sequence spans 560 residues: Chaperonin GroEL 2 (560 aa).

ATP is bound by residues 29-32 (TIGP), 86-90 (DGTTT), glycine 413, and aspartate 492. The disordered stretch occupies residues 520-542 (DKPEPPSAPGAEGGDPMGGMGGM). Gly residues predominate over residues 530–542 (AEGGDPMGGMGGM).

Belongs to the chaperonin (HSP60) family. In terms of assembly, forms a cylinder of 14 subunits composed of two heptameric rings stacked back-to-back. Interacts with the co-chaperonin GroES.

It is found in the cytoplasm. It catalyses the reaction ATP + H2O + a folded polypeptide = ADP + phosphate + an unfolded polypeptide.. Together with its co-chaperonin GroES, plays an essential role in assisting protein folding. The GroEL-GroES system forms a nano-cage that allows encapsulation of the non-native substrate proteins and provides a physical environment optimized to promote and accelerate protein folding. This is Chaperonin GroEL 2 from Prochlorococcus marinus (strain NATL2A).